The following is a 506-amino-acid chain: UBX domain-containing protein 4 (506 aa).

The interval Met1–Glu199 is interaction with UBQLN1. At Met1–Thr411 the chain is on the cytoplasmic side. The interval Gln110–Leu194 is disordered. Composition is skewed to polar residues over residues Ser120–Ala136 and Leu153–Ala167. Positions Asp313 to Leu391 constitute a UBX domain. An intramembrane segment occupies Leu412–Phe432. At Ser433–Met506 the chain is on the cytoplasmic side. The interval Pro437–Met506 is disordered. The span at Ala444–Ser456 shows a compositional bias: low complexity. Residues Lys457 to Asp489 are compositionally biased toward basic and acidic residues. Thr487 carries the phosphothreonine modification. Residues Asn496–Met506 show a composition bias toward polar residues.

In terms of assembly, directly interacts with VCP. Interacts with UBQLN1. Forms a complex with VCP and UBQLN1. In terms of tissue distribution, expressed in many tissues, including brain, heart, kidney, liver, muscle and spleen (at protein level).

It is found in the endoplasmic reticulum membrane. The protein localises to the nucleus envelope. Functionally, involved in endoplasmic reticulum-associated protein degradation (ERAD). Acts as a platform to recruit both UBQLN1 and VCP to the ER during ERAD. This Mus musculus (Mouse) protein is UBX domain-containing protein 4 (Ubxn4).